Here is a 27-residue protein sequence, read N- to C-terminus: uncharacterized protein (27 aa).

The protein localises to the plastid. It is found in the chloroplast. This is an uncharacterized protein from Marchantia polymorpha (Common liverwort).